The primary structure comprises 1381 residues: Hepatocyte growth factor receptor (1381 aa).

The first 24 residues, 1 to 24 (MKAPTVLAPGILVLLFTLVQKSNG), serve as a signal peptide directing secretion. Topologically, residues 25–933 (ECREALAKSE…VIVQSDQSFT (909 aa)) are extracellular. The region spanning 27–516 (REALAKSEMN…TGKKITRIPL (490 aa)) is the Sema domain. 3 N-linked (GlcNAc...) asparagine glycosylation sites follow: Asn-45, Asn-100, and Asn-106. Intrachain disulfides connect Cys-95–Cys-101, Cys-98–Cys-160, Cys-133–Cys-141, and Cys-173–Cys-176. N-linked (GlcNAc...) asparagine glycans are attached at residues Asn-203 and Asn-359. 2 disulfides stabilise this stretch: Cys-299-Cys-364 and Cys-386-Cys-398. Asn-400 and Asn-406 each carry an N-linked (GlcNAc...) asparagine glycan. Intrachain disulfides connect Cys-521/Cys-539, Cys-527/Cys-562, Cys-530/Cys-546, and Cys-542/Cys-552. Asn-554 carries N-linked (GlcNAc...) asparagine glycosylation. 3 IPT/TIG domains span residues 564–656 (PTVY…FSYV), 658–740 (PIIT…FSYR), and 743–837 (PIVY…LIYV). Thr-583 carries an O-linked (Man) threonine glycan. Residues Asn-608 and Asn-636 are each glycosylated (N-linked (GlcNAc...) asparagine). O-linked (Man) threonine glycans are attached at residues Thr-677 and Thr-762. 2 N-linked (GlcNAc...) asparagine glycosylation sites follow: Asn-786 and Asn-880. Residues 934 to 956 (GVIVGVVAISIILLLLLGLFLWL) form a helical membrane-spanning segment. Residues 957–1381 (KKKKQIKDLG…QDDLDGEVDT (425 aa)) are Cytoplasmic-facing. Ser-967 carries the post-translational modification Phosphoserine. Residue Thr-978 is modified to Phosphothreonine. Phosphoserine occurs at positions 991, 998, and 1001. A Phosphotyrosine modification is found at Tyr-1004. In terms of domain architecture, Protein kinase spans 1079-1346 (VHFNEVIGRG…RISAIFSTFI (268 aa)). ATP contacts are provided by residues 1085–1093 (IGRGHFGCV) and Lys-1111. Asp-1205 (proton acceptor) is an active-site residue. The segment at 1213–1381 (LDEKFTVKVA…QDDLDGEVDT (169 aa)) is interaction with RANBP9. The residue at position 1231 (Tyr-1231) is a Phosphotyrosine. A phosphotyrosine; by autocatalysis mark is found at Tyr-1235 and Tyr-1236. A Phosphothreonine modification is found at Thr-1290. Residues 1321–1360 (WHPKAEMRPSFSELVSRISAIFSTFIGEHYVHVNATYVNV) are interaction with MUC20. Phosphotyrosine; by autocatalysis is present on residues Tyr-1350 and Tyr-1357. Tyr-1366 is modified (phosphotyrosine).

The protein belongs to the protein kinase superfamily. Tyr protein kinase family. As to quaternary structure, heterodimer made of an alpha chain (50 kDa) and a beta chain (145 kDa) which are disulfide linked. Binds PLXNB1. Interacts when phosphorylated with downstream effectors including STAT3, PIK3R1, SRC, PCLG1, GRB2 and GAB1. Interacts with SPSB1, SPSB2 and SPSB4. Interacts with INPP5D/SHIP1. When phosphorylated at Tyr-1357, interacts with INPPL1/SHIP2. Interacts with RANBP9 and RANBP10, as well as SPSB1, SPSB2, SPSB3 and SPSB4. SPSB1 binding occurs in the presence and in the absence of HGF, however HGF treatment has a positive effect on this interaction. Interacts with MUC20; prevents interaction with GRB2 and suppresses hepatocyte growth factor-induced cell proliferation. Interacts with GRB10. Interacts with PTPN1 and PTPN2. Interacts with HSP90AA1 and HSP90AB1; the interaction suppresses MET kinase activity. Interacts with tensin TNS3. Interacts (when phosphorylated) with tensin TNS4 (via SH2 domain); the interaction increases MET protein stability by inhibiting MET endocytosis and subsequent lysosomal degradation. In terms of processing, autophosphorylated in response to ligand binding on Tyr-1235 and Tyr-1236 in the kinase domain leading to further phosphorylation of Tyr-1350 and Tyr-1357 in the C-terminal multifunctional docking site. Dephosphorylated by PTPRJ at Tyr-1350 and Tyr-1366. Dephosphorylated by PTPN1 and PTPN2. Post-translationally, ubiquitinated. Ubiquitination by CBL regulates the receptor stability and activity through proteasomal degradation. O-mannosylation of IPT/TIG domains by TMEM260 is required for protein maturation. O-mannosylated residues are composed of single mannose glycans that are not elongated or modified.

The protein resides in the membrane. The catalysed reaction is L-tyrosyl-[protein] + ATP = O-phospho-L-tyrosyl-[protein] + ADP + H(+). With respect to regulation, in its inactive state, the C-terminal tail interacts with the catalytic domain and inhibits the kinase activity. Upon ligand binding, the C-terminal tail is displaced and becomes phosphorylated, thus increasing the kinase activity. Functionally, receptor tyrosine kinase that transduces signals from the extracellular matrix into the cytoplasm by binding to hepatocyte growth factor/HGF ligand. Regulates many physiological processes including proliferation, scattering, morphogenesis and survival. Ligand binding at the cell surface induces autophosphorylation of MET on its intracellular domain that provides docking sites for downstream signaling molecules. Following activation by ligand, interacts with the PI3-kinase subunit PIK3R1, PLCG1, SRC, GRB2, STAT3 or the adapter GAB1. Recruitment of these downstream effectors by MET leads to the activation of several signaling cascades including the RAS-ERK, PI3 kinase-AKT, or PLCgamma-PKC. The RAS-ERK activation is associated with the morphogenetic effects while PI3K/AKT coordinates prosurvival effects. During embryonic development, MET signaling plays a role in gastrulation, development and migration of muscles and neuronal precursors, angiogenesis and kidney formation. In adults, participates in wound healing as well as organ regeneration and tissue remodeling. Also promotes differentiation and proliferation of hematopoietic cells. The protein is Hepatocyte growth factor receptor (MET) of Dasypus novemcinctus (Nine-banded armadillo).